The sequence spans 673 residues: Ion-translocating oxidoreductase complex subunit C (673 aa).

4Fe-4S ferredoxin-type domains lie at 368–397 and 407–436; these read MGAPQEETSCIRCSACADACPADLLPQQLY and KATAHHIADCIECGACAWVCPSNIPLVQYF. Cysteine 377, cysteine 380, cysteine 383, cysteine 387, cysteine 416, cysteine 419, cysteine 422, and cysteine 426 together coordinate [4Fe-4S] cluster. The tract at residues 529–554 is disordered; that stretch reads EARKAQARAKQAGHPMADSATSGDDP.

The protein belongs to the 4Fe4S bacterial-type ferredoxin family. RnfC subfamily. The complex is composed of six subunits: RsxA, RsxB, RsxC, RsxD, RsxE and RsxG. [4Fe-4S] cluster serves as cofactor.

The protein resides in the cell inner membrane. Functionally, part of a membrane-bound complex that couples electron transfer with translocation of ions across the membrane. Required to maintain the reduced state of SoxR. The polypeptide is Ion-translocating oxidoreductase complex subunit C (Salmonella arizonae (strain ATCC BAA-731 / CDC346-86 / RSK2980)).